The primary structure comprises 483 residues: ATP synthase subunit beta, chloroplastic (483 aa).

Residue 163-170 (GGAGVGKT) coordinates ATP.

This sequence belongs to the ATPase alpha/beta chains family. In terms of assembly, F-type ATPases have 2 components, CF(1) - the catalytic core - and CF(0) - the membrane proton channel. CF(1) has five subunits: alpha(3), beta(3), gamma(1), delta(1), epsilon(1). CF(0) has four main subunits: a(1), b(1), b'(1) and c(9-12).

It is found in the plastid. The protein resides in the chloroplast thylakoid membrane. The catalysed reaction is ATP + H2O + 4 H(+)(in) = ADP + phosphate + 5 H(+)(out). Functionally, produces ATP from ADP in the presence of a proton gradient across the membrane. The catalytic sites are hosted primarily by the beta subunits. The chain is ATP synthase subunit beta, chloroplastic from Ostreococcus tauri.